The sequence spans 499 residues: Bifunctional purine biosynthesis protein PurH (499 aa).

Residues 1-144 (MIKRALISVF…KNFKDVVVLT (144 aa)) enclose the MGS-like domain.

The protein belongs to the PurH family.

It carries out the reaction (6R)-10-formyltetrahydrofolate + 5-amino-1-(5-phospho-beta-D-ribosyl)imidazole-4-carboxamide = 5-formamido-1-(5-phospho-D-ribosyl)imidazole-4-carboxamide + (6S)-5,6,7,8-tetrahydrofolate. The enzyme catalyses IMP + H2O = 5-formamido-1-(5-phospho-D-ribosyl)imidazole-4-carboxamide. The protein operates within purine metabolism; IMP biosynthesis via de novo pathway; 5-formamido-1-(5-phospho-D-ribosyl)imidazole-4-carboxamide from 5-amino-1-(5-phospho-D-ribosyl)imidazole-4-carboxamide (10-formyl THF route): step 1/1. It functions in the pathway purine metabolism; IMP biosynthesis via de novo pathway; IMP from 5-formamido-1-(5-phospho-D-ribosyl)imidazole-4-carboxamide: step 1/1. In Clostridium botulinum (strain Kyoto / Type A2), this protein is Bifunctional purine biosynthesis protein PurH.